Reading from the N-terminus, the 243-residue chain is MNAPDGLQRCFVLHRRPYSESSLILDIFSEEFGRITLMSKGARSKRSNLKGALQPFTPLLLKWSGKGAMKTLRQAEPISLGLPLTGINLYSALYVNELIGRVLMQEVSMPGLFHDYLFALTELAQADNPEPALRRFELALLAAMGYGVDFLHCAGTGEPIDPQMTYRYREQKGFIASVRRDNLTFLGNELIAISERRFLTKEQLQAAKRFTRIALKPYLGGKPLKSRELFIQMRIPRTRSMEK.

It belongs to the RecO family.

In terms of biological role, involved in DNA repair and RecF pathway recombination. This is DNA repair protein RecO from Vibrio vulnificus (strain CMCP6).